Here is a 447-residue protein sequence, read N- to C-terminus: NADH-ubiquinone oxidoreductase chain 4 (447 aa).

13 helical membrane passes run 28 to 48, 56 to 76, 85 to 105, 110 to 130, 141 to 161, 183 to 203, 213 to 233, 246 to 266, 273 to 293, 301 to 321, 343 to 365, 380 to 400, and 409 to 431; these read IFLA…FCDI, MISY…LMAS, YVNL…FTFS, FMFY…ILGW, IYLL…IFYI, FLYL…LVHL, PVSG…YGLL, FNYI…LICL, ALIA…LMTM, SYTL…LANI, SLSL…LNLL, LTMI…LYLF, and YSGV…LHWL.

Belongs to the complex I subunit 4 family.

It is found in the mitochondrion membrane. The catalysed reaction is a ubiquinone + NADH + 5 H(+)(in) = a ubiquinol + NAD(+) + 4 H(+)(out). Core subunit of the mitochondrial membrane respiratory chain NADH dehydrogenase (Complex I) that is believed to belong to the minimal assembly required for catalysis. Complex I functions in the transfer of electrons from NADH to the respiratory chain. The immediate electron acceptor for the enzyme is believed to be ubiquinone. The chain is NADH-ubiquinone oxidoreductase chain 4 from Aedes aegypti (Yellowfever mosquito).